We begin with the raw amino-acid sequence, 169 residues long: Thermonuclease (169 aa).

Residues 1–26 (MKKITTGLIIVVAAIIVLSIQFMTES) form the signal peptide. Catalysis depends on residues R65, E73, and R115.

It belongs to the thermonuclease family. Ca(2+) serves as cofactor.

Its subcellular location is the secreted. It catalyses the reaction Endonucleolytic cleavage to nucleoside 3'-phosphates and 3'-phosphooligonucleotide end-products.. Its function is as follows. Enzyme that catalyzes the hydrolysis of both DNA and RNA at the 5'-position of the phosphodiester bond. The polypeptide is Thermonuclease (nucH) (Staphylococcus hyicus).